Reading from the N-terminus, the 225-residue chain is Probable septum site-determining protein MinC (225 aa).

The segment at Pro-87 to Pro-112 is disordered. Residues Ala-91 to Lys-108 show a composition bias toward polar residues.

The protein belongs to the MinC family. In terms of assembly, interacts with MinD and FtsZ.

Its function is as follows. Cell division inhibitor that blocks the formation of polar Z ring septums. Rapidly oscillates between the poles of the cell to destabilize FtsZ filaments that have formed before they mature into polar Z rings. Prevents FtsZ polymerization. The sequence is that of Probable septum site-determining protein MinC from Prochlorococcus marinus (strain MIT 9313).